The following is a 605-amino-acid chain: Insulin-like growth factor-binding protein complex acid labile subunit (605 aa).

Residues 1-27 (MALRKGGLALALLLLSWVALGPRSLEG) form the signal peptide. The LRRNT domain maps to 32–74 (TPGEAEGPACPAACVCSYDDDADELSVFCSSRNLTRLPDGVPG). 2 disulfide bridges follow: cysteine 41–cysteine 47 and cysteine 45–cysteine 60. 3 N-linked (GlcNAc...) asparagine glycosylation sites follow: asparagine 64, asparagine 85, and asparagine 96. 19 LRR repeats span residues 75–96 (GTQA…AFQN), 99–120 (SLGF…ALLG), 123–144 (NLCH…TFAH), 147–168 (ALAS…LFEG), 171–192 (SLWD…AFRG), 195–216 (SLRE…LFSG), 219–240 (ELRE…VFVQ), 243–264 (RLQK…AFLG), 267–288 (ALRW…TFPG), 291–312 (GLRV…TFKD), 315–336 (FLEE…SFEG), 339–360 (QLEV…AFLG), 363–384 (NVAV…VFRG), 387–408 (KLHS…TFTG), 411–432 (GLRR…SLWG), 435–456 (ELLE…LFQG), 459–480 (KLEY…ALGP), 483–504 (RAFW…LLAP), and 507–528 (RLRY…PPGL). The N-linked (GlcNAc...) asparagine glycan is linked to asparagine 368. Residue asparagine 515 is glycosylated (N-linked (GlcNAc...) asparagine). The LRRCT domain occupies 536 to 605 (NPWDCGCPLK…DLSEAHFAPC (70 aa)). 3 disulfide bridges follow: cysteine 540–cysteine 583, cysteine 542–cysteine 605, and cysteine 566–cysteine 571. Asparagine 580 is a glycosylation site (N-linked (GlcNAc...) asparagine).

Forms a ternary complex with IGF1 and IGFBP3. As to expression, plasma.

It is found in the secreted. Its subcellular location is the extracellular space. Involved in protein-protein interactions that result in protein complexes, receptor-ligand binding or cell adhesion. In Homo sapiens (Human), this protein is Insulin-like growth factor-binding protein complex acid labile subunit (IGFALS).